The sequence spans 359 residues: Fructose-bisphosphate aldolase 1 (359 aa).

Ser50 contributes to the D-glyceraldehyde 3-phosphate binding site. The active-site Proton donor is the Asp83. Residues His84, Asp105, Glu142, and His198 each coordinate Zn(2+). Residue Gly199 coordinates dihydroxyacetone phosphate. Position 232 (His232) interacts with Zn(2+). Dihydroxyacetone phosphate contacts are provided by residues 233-235 (GSS) and 275-278 (NIDT).

This sequence belongs to the class II fructose-bisphosphate aldolase family. Homodimer. The cofactor is Zn(2+).

The catalysed reaction is beta-D-fructose 1,6-bisphosphate = D-glyceraldehyde 3-phosphate + dihydroxyacetone phosphate. It participates in carbohydrate biosynthesis; Calvin cycle. Its pathway is carbohydrate degradation; glycolysis; D-glyceraldehyde 3-phosphate and glycerone phosphate from D-glucose: step 4/4. Its function is as follows. Catalyzes the aldol condensation of dihydroxyacetone phosphate (DHAP or glycerone-phosphate) with glyceraldehyde 3-phosphate (G3P) to form fructose 1,6-bisphosphate (FBP) in gluconeogenesis and the reverse reaction in glycolysis. In Cereibacter sphaeroides (Rhodobacter sphaeroides), this protein is Fructose-bisphosphate aldolase 1 (cfxA).